The following is a 147-amino-acid chain: Peptidyl-lysine N-acetyltransferase YjaB (147 aa).

Residues 3-144 (ISIRRSRHEE…KPYPLLNLAY (142 aa)) enclose the N-acetyltransferase domain.

The protein belongs to the acetyltransferase family.

It catalyses the reaction L-lysyl-[protein] + acetyl-CoA = N(6)-acetyl-L-lysyl-[protein] + CoA + H(+). Its function is as follows. N-epsilon-lysine acetyltransferase that catalyzes acetylation of a large number of proteins. Binds acetyl-CoA. In Escherichia coli (strain K12), this protein is Peptidyl-lysine N-acetyltransferase YjaB (yjaB).